Here is an 816-residue protein sequence, read N- to C-terminus: Stemod-13(17)-ene synthase (816 aa).

Over residues 1–10 (MMLLSSSYSG) the composition is skewed to polar residues. The tract at residues 1-24 (MMLLSSSYSGGQFPGVSPLGTRPK) is disordered. The Mg(2+) site is built by D553, D557, N698, T702, and E706. The DDXXD motif signature appears at 553-557 (DDFFD).

The protein belongs to the terpene synthase family. Mg(2+) serves as cofactor.

The enzyme catalyses 9alpha-copalyl diphosphate = stemod-13(17)-ene + diphosphate. In terms of biological role, catalyzes the conversion of syn-copalyl diphosphate to stemodene. This chain is Stemod-13(17)-ene synthase (KSL11), found in Oryza sativa subsp. indica (Rice).